The following is a 489-amino-acid chain: RNA polymerase II subunit 5-mediating protein homolog (489 aa).

Disordered stretches follow at residues 141-188 (NSDE…MDEE), 200-329 (EEKE…EEDE), 396-415 (ILKTNSSGNLMSTIPKSYNE), and 434-489 (FENQ…RQNK). The segment covering 157 to 168 (QKSTTTTTTTTT) has biased composition (low complexity). Composition is skewed to basic and acidic residues over residues 169–188 (SKDKPKTEEEKKKSKEMDEE) and 215–224 (FNKKFNKKLD). Composition is skewed to acidic residues over residues 227 to 265 (GSDEEYDDDNYNNNNDDDDDNDEDDDREYYQEEGFEDEK), 276 to 298 (EEDDHDDDDDYYDEGEEIVEYYD), and 315 to 329 (QGDDDNDDNDNEEDE). Residues 396 to 413 (ILKTNSSGNLMSTIPKSY) are compositionally biased toward polar residues. Basic residues predominate over residues 480 to 489 (SRFKSSRQNK).

It belongs to the RNA polymerase II subunit 5-mediating protein family.

Its subcellular location is the nucleus. In Dictyostelium discoideum (Social amoeba), this protein is RNA polymerase II subunit 5-mediating protein homolog (rmp).